A 318-amino-acid polypeptide reads, in one-letter code: Thymidylate synthase (318 aa).

Residues Arg-25 and 180-181 (RR) each bind dUMP. Cys-200 acts as the Nucleophile in catalysis. DUMP-binding positions include 220 to 223 (RSGD), Asn-231, and 261 to 263 (HIY). (6R)-5,10-methylene-5,6,7,8-tetrahydrofolate is bound at residue Asp-223. Ala-317 lines the (6R)-5,10-methylene-5,6,7,8-tetrahydrofolate pocket.

This sequence belongs to the thymidylate synthase family. Bacterial-type ThyA subfamily. Homodimer.

It localises to the cytoplasm. It carries out the reaction dUMP + (6R)-5,10-methylene-5,6,7,8-tetrahydrofolate = 7,8-dihydrofolate + dTMP. It participates in pyrimidine metabolism; dTTP biosynthesis. In terms of biological role, catalyzes the reductive methylation of 2'-deoxyuridine-5'-monophosphate (dUMP) to 2'-deoxythymidine-5'-monophosphate (dTMP) while utilizing 5,10-methylenetetrahydrofolate (mTHF) as the methyl donor and reductant in the reaction, yielding dihydrofolate (DHF) as a by-product. This enzymatic reaction provides an intracellular de novo source of dTMP, an essential precursor for DNA biosynthesis. This Bacillus cytotoxicus (strain DSM 22905 / CIP 110041 / 391-98 / NVH 391-98) protein is Thymidylate synthase.